A 152-amino-acid polypeptide reads, in one-letter code: Small ribosomal subunit protein uS13 (152 aa).

Belongs to the universal ribosomal protein uS13 family.

The protein resides in the cytoplasm. Its function is as follows. Located at the top of the head of the 40S subunit, it contacts several helices of the 18S rRNA. The protein is Small ribosomal subunit protein uS13 (RPS18) of Branchiostoma belcheri (Amphioxus).